We begin with the raw amino-acid sequence, 143 residues long: Large ribosomal subunit protein uL11 (143 aa).

The protein belongs to the universal ribosomal protein uL11 family. As to quaternary structure, part of the ribosomal stalk of the 50S ribosomal subunit. Interacts with L10 and the large rRNA to form the base of the stalk. L10 forms an elongated spine to which L12 dimers bind in a sequential fashion forming a multimeric L10(L12)X complex. In terms of processing, one or more lysine residues are methylated.

Forms part of the ribosomal stalk which helps the ribosome interact with GTP-bound translation factors. The polypeptide is Large ribosomal subunit protein uL11 (Paraburkholderia phymatum (strain DSM 17167 / CIP 108236 / LMG 21445 / STM815) (Burkholderia phymatum)).